Here is a 60-residue protein sequence, read N- to C-terminus: Large ribosomal subunit protein bL32A (60 aa).

Basic residues predominate over residues Met-1–Gln-19. The tract at residues Met-1–Lys-21 is disordered.

This sequence belongs to the bacterial ribosomal protein bL32 family.

This chain is Large ribosomal subunit protein bL32A, found in Nocardia farcinica (strain IFM 10152).